The chain runs to 244 residues: 6-carboxyhexanoate--CoA ligase (244 aa).

This sequence belongs to the BioW family. As to quaternary structure, homodimer. The cofactor is Mg(2+).

The catalysed reaction is heptanedioate + ATP + CoA = 6-carboxyhexanoyl-CoA + AMP + diphosphate. Its pathway is metabolic intermediate metabolism; pimeloyl-CoA biosynthesis; pimeloyl-CoA from pimelate: step 1/1. In terms of biological role, catalyzes the transformation of pimelate into pimeloyl-CoA with concomitant hydrolysis of ATP to AMP. The protein is 6-carboxyhexanoate--CoA ligase of Methanococcus maripaludis (strain C6 / ATCC BAA-1332).